We begin with the raw amino-acid sequence, 387 residues long: Ferrochelatase (387 aa).

Fe cation is bound by residues His196 and Glu277.

Belongs to the ferrochelatase family.

Its subcellular location is the cytoplasm. It catalyses the reaction heme b + 2 H(+) = protoporphyrin IX + Fe(2+). The protein operates within porphyrin-containing compound metabolism; protoheme biosynthesis; protoheme from protoporphyrin-IX: step 1/1. Functionally, catalyzes the ferrous insertion into protoporphyrin IX. The sequence is that of Ferrochelatase from Gloeothece citriformis (strain PCC 7424) (Cyanothece sp. (strain PCC 7424)).